Here is a 367-residue protein sequence, read N- to C-terminus: tRNA(Ile)-lysidine synthase, chloroplastic (367 aa).

64 to 69 (SGGQDS) contacts ATP.

The protein belongs to the tRNA(Ile)-lysidine synthase family.

The protein resides in the plastid. It localises to the chloroplast. It catalyses the reaction cytidine(34) in tRNA(Ile2) + L-lysine + ATP = lysidine(34) in tRNA(Ile2) + AMP + diphosphate + H(+). Its function is as follows. Ligates lysine onto the cytidine present at position 34 of the AUA codon-specific tRNA(Ile) that contains the anticodon CAU, in an ATP-dependent manner. Cytidine is converted to lysidine, thus changing the amino acid specificity of the tRNA from methionine to isoleucine. The protein is tRNA(Ile)-lysidine synthase, chloroplastic of Nephroselmis olivacea (Green alga).